Here is a 213-residue protein sequence, read N- to C-terminus: Uridine kinase (213 aa).

15–22 (GASASGKS) serves as a coordination point for ATP.

This sequence belongs to the uridine kinase family.

The protein resides in the cytoplasm. It carries out the reaction uridine + ATP = UMP + ADP + H(+). The catalysed reaction is cytidine + ATP = CMP + ADP + H(+). Its pathway is pyrimidine metabolism; CTP biosynthesis via salvage pathway; CTP from cytidine: step 1/3. The protein operates within pyrimidine metabolism; UMP biosynthesis via salvage pathway; UMP from uridine: step 1/1. In Serratia proteamaculans (strain 568), this protein is Uridine kinase.